Consider the following 582-residue polypeptide: NAB transcription cofactor mab-10 (582 aa).

Residues M1–S70 show a composition bias toward low complexity. Disordered stretches follow at residues M1–P84, S257–I287, P333–L365, and S516–S582. The interval T83–N161 is NCD1. Low complexity-rich tracts occupy residues S257–S276 and P333–S345. Positions L396 to R519 are NCD2. Over residues E573–S582 the composition is skewed to basic and acidic residues.

The protein belongs to the NAB family. Interacts with transcription factor lin-29 (via C-terminus).

Its subcellular location is the nucleus. Transcriptional cofactor. Heterochronic protein, involved in timing of a subset of differentiation events during the larval-to-adult transition. Promotes hypodermal terminal differentiation, together with transcription factor lin-29, perhaps as part of a transcriptional complex. Involved in regulating molting by repressing the expression of nuclear hormone receptors nhr-23 and nhr-25 in the adult hypoderm, probably acting in concert with lin-29. This Caenorhabditis elegans protein is NAB transcription cofactor mab-10.